A 153-amino-acid polypeptide reads, in one-letter code: Putative pre-16S rRNA nuclease (153 aa).

The protein belongs to the YqgF nuclease family.

It is found in the cytoplasm. Its function is as follows. Could be a nuclease involved in processing of the 5'-end of pre-16S rRNA. This Prochlorococcus marinus (strain SARG / CCMP1375 / SS120) protein is Putative pre-16S rRNA nuclease.